The primary structure comprises 329 residues: Ankyrin repeat and SOCS box protein 5 (329 aa).

ANK repeat units follow at residues 69 to 98 (ADRS…NVNA), 102 to 131 (DHVT…NVNA), 135 to 164 (DGVT…KPQL), 167 to 196 (CLPS…DVDQ), 200 to 229 (HLGT…DVQK), and 232 to 261 (YWDT…DINA). Residues 278-329 (LVERLLLQHEATPSSLCQLCRLCIRNYIGRPRLHLIPQLQLPTLLQNFLQYR) form the SOCS box domain.

This sequence belongs to the ankyrin SOCS box (ASB) family.

It participates in protein modification; protein ubiquitination. Functionally, may be a substrate-recognition component of a SCF-like ECS (Elongin-Cullin-SOCS-box protein) E3 ubiquitin-protein ligase complex which mediates the ubiquitination and subsequent proteasomal degradation of target proteins. May play a role in the initiation of arteriogenesis. This is Ankyrin repeat and SOCS box protein 5 (ASB5) from Bos taurus (Bovine).